The following is a 329-amino-acid chain: Holliday junction branch migration complex subunit RuvB (329 aa).

Residues 1–180 (MKNILQSTEC…FGIPIHLEFY (180 aa)) form a large ATPase domain (RuvB-L) region. ATP is bound by residues I19, R20, G61, K64, T65, T66, 127–129 (EDF), R170, Y180, and R217. T65 contacts Mg(2+). Positions 181–252 (STEELIKVIQ…FADKALLRLG (72 aa)) are small ATPAse domain (RuvB-S). The interval 255 to 329 (KLGLDRQDIQ…ISYLKEQSYI (75 aa)) is head domain (RuvB-H). DNA-binding residues include R308 and R313.

The protein belongs to the RuvB family. In terms of assembly, homohexamer. Forms an RuvA(8)-RuvB(12)-Holliday junction (HJ) complex. HJ DNA is sandwiched between 2 RuvA tetramers; dsDNA enters through RuvA and exits via RuvB. An RuvB hexamer assembles on each DNA strand where it exits the tetramer. Each RuvB hexamer is contacted by two RuvA subunits (via domain III) on 2 adjacent RuvB subunits; this complex drives branch migration. In the full resolvosome a probable DNA-RuvA(4)-RuvB(12)-RuvC(2) complex forms which resolves the HJ.

The protein localises to the cytoplasm. The enzyme catalyses ATP + H2O = ADP + phosphate + H(+). Functionally, the RuvA-RuvB-RuvC complex processes Holliday junction (HJ) DNA during genetic recombination and DNA repair, while the RuvA-RuvB complex plays an important role in the rescue of blocked DNA replication forks via replication fork reversal (RFR). RuvA specifically binds to HJ cruciform DNA, conferring on it an open structure. The RuvB hexamer acts as an ATP-dependent pump, pulling dsDNA into and through the RuvAB complex. RuvB forms 2 homohexamers on either side of HJ DNA bound by 1 or 2 RuvA tetramers; 4 subunits per hexamer contact DNA at a time. Coordinated motions by a converter formed by DNA-disengaged RuvB subunits stimulates ATP hydrolysis and nucleotide exchange. Immobilization of the converter enables RuvB to convert the ATP-contained energy into a lever motion, pulling 2 nucleotides of DNA out of the RuvA tetramer per ATP hydrolyzed, thus driving DNA branch migration. The RuvB motors rotate together with the DNA substrate, which together with the progressing nucleotide cycle form the mechanistic basis for DNA recombination by continuous HJ branch migration. Branch migration allows RuvC to scan DNA until it finds its consensus sequence, where it cleaves and resolves cruciform DNA. The polypeptide is Holliday junction branch migration complex subunit RuvB (Ehrlichia canis (strain Jake)).